The following is a 281-amino-acid chain: Inhibitor of growth protein 2 (281 aa).

The stretch at 49-101 (VLRELDNKYQETLKEIDDVYEKYKKEDDSNQKKRLQQHLQRALINSQELGDEK) forms a coiled coil. The tract at residues 123–204 (SQCFQDPAES…AKQEREASPV (82 aa)) is disordered. Residues 131–141 (ESERASDKSKM) are compositionally biased toward basic and acidic residues. Residues 182-194 (KRSKSAKKKKRSK) show a composition bias toward basic residues. Lysine 196 is covalently cross-linked (Glycyl lysine isopeptide (Lys-Gly) (interchain with G-Cter in SUMO1)). The segment at 213 to 262 (PTYCLCNQVSYGEMIGCDNEQCPIEWFHFSCVSLTYKPKGKWYCPKCRGD) adopts a PHD-type zinc-finger fold. Residues cysteine 216, cysteine 218, cysteine 229, cysteine 234, histidine 240, cysteine 243, cysteine 256, and cysteine 259 each coordinate Zn(2+). Positions 261–275 (GDNEKTMDKSTEKTK) are enriched in basic and acidic residues. The disordered stretch occupies residues 261–281 (GDNEKTMDKSTEKTKKERRAR). The interval 265–281 (KTMDKSTEKTKKERRAR) is PBR.

It belongs to the ING family. In terms of assembly, interacts with H3K4me3 and to a lesser extent with H3K4me2. Component of a mSin3A-like complex at least consisting of SIN3A, HDAC1, HDAC2, RBBP4/RbAp48, RBBP7/RbAp46, SAP30 and ING2. In terms of processing, sumoylation enhances its association with SIN3A and is required for binding to some target gene promoters, this is the case for TMEM71.

It is found in the nucleus. Functionally, seems to be involved in p53/TP53 activation and p53/TP53-dependent apoptotic pathways, probably by enhancing acetylation of p53/TP53. Component of a mSin3A-like corepressor complex, which is probably involved in deacetylation of nucleosomal histones. ING2 activity seems to be modulated by binding to phosphoinositides (PtdInsPs). The chain is Inhibitor of growth protein 2 (Ing2) from Mus musculus (Mouse).